We begin with the raw amino-acid sequence, 360 residues long: Phospho-N-acetylmuramoyl-pentapeptide-transferase (360 aa).

The next 10 helical transmembrane spans lie at 27–47, 72–92, 94–114, 135–155, 167–187, 199–219, 236–256, 263–283, 289–309, and 337–357; these read GAIA…IKSL, TPTM…LLWA, LSNH…AIGF, LACE…LGTP, GYVV…IVAS, GLAI…AYLV, AGEL…FLWF, IFMG…IAVA, VLAI…VQVV, and QVVV…LSTL.

This sequence belongs to the glycosyltransferase 4 family. MraY subfamily. Requires Mg(2+) as cofactor.

Its subcellular location is the cell inner membrane. It carries out the reaction UDP-N-acetyl-alpha-D-muramoyl-L-alanyl-gamma-D-glutamyl-meso-2,6-diaminopimeloyl-D-alanyl-D-alanine + di-trans,octa-cis-undecaprenyl phosphate = di-trans,octa-cis-undecaprenyl diphospho-N-acetyl-alpha-D-muramoyl-L-alanyl-D-glutamyl-meso-2,6-diaminopimeloyl-D-alanyl-D-alanine + UMP. It functions in the pathway cell wall biogenesis; peptidoglycan biosynthesis. In terms of biological role, catalyzes the initial step of the lipid cycle reactions in the biosynthesis of the cell wall peptidoglycan: transfers peptidoglycan precursor phospho-MurNAc-pentapeptide from UDP-MurNAc-pentapeptide onto the lipid carrier undecaprenyl phosphate, yielding undecaprenyl-pyrophosphoryl-MurNAc-pentapeptide, known as lipid I. The protein is Phospho-N-acetylmuramoyl-pentapeptide-transferase of Beijerinckia indica subsp. indica (strain ATCC 9039 / DSM 1715 / NCIMB 8712).